The sequence spans 89 residues: MRCGCLACDGVLCANGPGRPRRPALTCTAVATRTLHSLATNAELVESADLTVTEDICSRIVSLPVHDHMAIADVARVVAPFGEGLARGG.

It to M.tuberculosis Rv3402c.

This is an uncharacterized protein from Mycobacterium tuberculosis (strain CDC 1551 / Oshkosh).